The chain runs to 117 residues: MRSLLFVVGAWVAAAVTHLTPNAALATGTTPTVGANSTADPGTGANGTTVPAAGTPANSTTAAETPAPFPPVDFALPVVIGGLCALTLAAMGAGALLHRCCRRAAARRRQRAAYVYA.

The N-terminal stretch at 1 to 26 (MRSLLFVVGAWVAAAVTHLTPNAALA) is a signal peptide. The segment at 26–64 (ATGTTPTVGANSTADPGTGANGTTVPAAGTPANSTTAAE) is disordered. The span at 27 to 40 (TGTTPTVGANSTAD) shows a compositional bias: polar residues. Residues 27–73 (TGTTPTVGANSTADPGTGANGTTVPAAGTPANSTTAAETPAPFPPVD) lie on the Extracellular side of the membrane. 3 N-linked (GlcNAc...) asparagine; by host glycosylation sites follow: Asn36, Asn46, and Asn58. Residues 74 to 94 (FALPVVIGGLCALTLAAMGAG) form a helical membrane-spanning segment. Over 95–117 (ALLHRCCRRAAARRRQRAAYVYA) the chain is Cytoplasmic.

This sequence belongs to the alphaherpesvirinae glycoprotein J family.

The protein resides in the host Golgi apparatus membrane. Its subcellular location is the host endoplasmic reticulum membrane. The protein localises to the host endosome membrane. Inhibits host cell apoptosis. Induces an increase in reactive oxygen species (ROS) in the host cell. In Homo sapiens (Human), this protein is Envelope glycoprotein J (gJ).